A 123-amino-acid polypeptide reads, in one-letter code: Small ribosomal subunit protein uS12 (123 aa).

Aspartate 89 carries the 3-methylthioaspartic acid modification. Residues 100-123 are disordered; sequence GSLDTSGVKDRKQGRSKYGTKRPK. Residues 113–123 show a composition bias toward basic residues; that stretch reads GRSKYGTKRPK.

The protein belongs to the universal ribosomal protein uS12 family. In terms of assembly, part of the 30S ribosomal subunit. Contacts proteins S8 and S17. May interact with IF1 in the 30S initiation complex.

Functionally, with S4 and S5 plays an important role in translational accuracy. Its function is as follows. Interacts with and stabilizes bases of the 16S rRNA that are involved in tRNA selection in the A site and with the mRNA backbone. Located at the interface of the 30S and 50S subunits, it traverses the body of the 30S subunit contacting proteins on the other side and probably holding the rRNA structure together. The combined cluster of proteins S8, S12 and S17 appears to hold together the shoulder and platform of the 30S subunit. This chain is Small ribosomal subunit protein uS12, found in Ectopseudomonas mendocina (strain ymp) (Pseudomonas mendocina).